A 362-amino-acid polypeptide reads, in one-letter code: Bifunctional chorismate mutase/prephenate dehydratase (362 aa).

A Chorismate mutase domain is found at 1–92 (MEELKELRKE…ACLSLEKKIK (92 aa)). Residues arginine 8, arginine 25, lysine 36, and glutamate 49 each coordinate substrate. The Prephenate dehydratase domain occupies 93-267 (VAYLGPKATF…NFTRFLVIAK (175 aa)). The ACT domain maps to 279–356 (SILFGVKDEP…QFLKVLGSYP (78 aa)).

It localises to the cytoplasm. It carries out the reaction chorismate = prephenate. The enzyme catalyses prephenate + H(+) = 3-phenylpyruvate + CO2 + H2O. It functions in the pathway amino-acid biosynthesis; L-phenylalanine biosynthesis; phenylpyruvate from prephenate: step 1/1. It participates in metabolic intermediate biosynthesis; prephenate biosynthesis; prephenate from chorismate: step 1/1. Functionally, catalyzes the Claisen rearrangement of chorismate to prephenate and the decarboxylation/dehydration of prephenate to phenylpyruvate. In Aquifex aeolicus (strain VF5), this protein is Bifunctional chorismate mutase/prephenate dehydratase (pheA).